A 1021-amino-acid polypeptide reads, in one-letter code: Sodium/potassium-transporting ATPase subunit alpha-1 (1021 aa).

The propeptide occupies 1–5; it reads MGKGA. The segment covering 1–11 has biased composition (basic and acidic residues); that stretch reads MGKGAGRDKYE. The disordered stretch occupies residues 1–31; sequence MGKGAGRDKYEPTATSEHGTKKKKAKERDMD. Over 6 to 85 the chain is Cytoplasmic; sequence GRDKYEPTAT…NTLTPPPTTP (80 aa). Phosphotyrosine is present on Y10. Phosphoserine; by PKC is present on S16. The tract at residues 80–82 is phosphoinositide-3 kinase binding; the sequence is PPP. Residues 86–106 traverse the membrane as a helical segment; sequence EWVKFCRQLFGGFSLLLWIGS. Topologically, residues 107–129 are extracellular; sequence LLCFLAYGITSVMEGEPNSDNLY. The helical transmembrane segment at 130 to 150 threads the bilayer; sequence LGVVLAAVVIITGCFSYYQEA. Residues 151–286 lie on the Cytoplasmic side of the membrane; the sequence is KSSKIMESFK…GGKTPIAMEI (136 aa). Positions 214–233 are disordered; the sequence is SSLTGESEPQTRSPDFSNEN. The chain crosses the membrane as a helical span at residues 287–306; the sequence is EHFIHLITGVAVFLGVSFFI. Residues 307 to 318 lie on the Extracellular side of the membrane; sequence LSLILEYTWLEA. Residues 319–336 traverse the membrane as a helical segment; it reads VIFLIGIIVANVPEGLLA. Over 337–770 the chain is Cytoplasmic; it reads TVTVCLTLTA…EEGRLIFDNL (434 aa). Residue D374 is the 4-aspartylphosphate intermediate of the active site. K485 is a binding site for ATP. Residues D715 and D719 each contribute to the Mg(2+) site. Residues 771–790 form a helical membrane-spanning segment; it reads KKSIAYTLTSNIPEITPFLI. Residues 791-800 are Extracellular-facing; that stretch reads FIIANIPLPL. A helical membrane pass occupies residues 801-821; sequence GTCTILCIDLGTDMVPAISLA. At 822-841 the chain is on the cytoplasmic side; it reads YEQAESDIMKRQPRNPKTDK. Residues 842 to 864 form a helical membrane-spanning segment; the sequence is LVNERLISMAYGQIGMIQALGGF. Topologically, residues 865-916 are extracellular; it reads FTYFVIMAENGFLPSGLVGIRLQWDDRWINDVEDSYGQQWTFEQRKIVEFTC. A helical transmembrane segment spans residues 917-936; it reads HTAFFVSIVVVQWADLIICK. Residues 937–949 are Cytoplasmic-facing; that stretch reads TRRNSVFQQGMKN. S941 is subject to Phosphoserine; by PKA. Residues 950 to 968 form a helical membrane-spanning segment; it reads KILIFGLFEETALAAFLSY. Topologically, residues 969–983 are extracellular; that stretch reads CPGMDVALRMYPLKP. A helical transmembrane segment spans residues 984 to 1004; sequence TWWFCAFPYSLLIFLYDEIRK. Topologically, residues 1005–1021 are cytoplasmic; the sequence is LIIRRNPGGWVERETYY.

Belongs to the cation transport ATPase (P-type) (TC 3.A.3) family. Type IIC subfamily. As to quaternary structure, the sodium/potassium-transporting ATPase is composed of a catalytic alpha subunit, an auxiliary non-catalytic beta subunit and an additional regulatory subunit. Post-translationally, phosphorylation on Tyr-10 modulates pumping activity.

The protein resides in the cell membrane. Its subcellular location is the sarcolemma. The enzyme catalyses K(+)(out) + Na(+)(in) + ATP + H2O = K(+)(in) + Na(+)(out) + ADP + phosphate + H(+). Its function is as follows. This is the catalytic component of the active enzyme, which catalyzes the hydrolysis of ATP coupled with the exchange of sodium and potassium ions across the plasma membrane. This action creates the electrochemical gradient of sodium and potassium ions, providing the energy for active transport of various nutrients. The sequence is that of Sodium/potassium-transporting ATPase subunit alpha-1 (ATP1A1) from Gallus gallus (Chicken).